We begin with the raw amino-acid sequence, 214 residues long: Adenylate kinase (214 aa).

An ATP-binding site is contributed by 10-15; it reads GAGKGT. Positions 30 to 59 are NMP; sequence STGDMLRSAVKAGTELGLKAKALMDHGKLV. AMP contacts are provided by residues Thr31, Arg36, 57 to 59, 85 to 88, and Gln92; these read KLV and GFPR. Residues 122 to 159 form an LID region; sequence GRRIHAPSGRVYHIKFNPPVVENKDDVTGEELTVRKDD. Residues Arg123 and 132-133 each bind ATP; that span reads VY. The AMP site is built by Arg156 and Arg167. Arg200 lines the ATP pocket.

Belongs to the adenylate kinase family. Monomer.

Its subcellular location is the cytoplasm. The enzyme catalyses AMP + ATP = 2 ADP. The protein operates within purine metabolism; AMP biosynthesis via salvage pathway; AMP from ADP: step 1/1. Its function is as follows. Catalyzes the reversible transfer of the terminal phosphate group between ATP and AMP. Plays an important role in cellular energy homeostasis and in adenine nucleotide metabolism. This chain is Adenylate kinase, found in Photorhabdus laumondii subsp. laumondii (strain DSM 15139 / CIP 105565 / TT01) (Photorhabdus luminescens subsp. laumondii).